The following is a 2549-amino-acid chain: Serine/threonine-protein kinase mTOR (2549 aa).

The residue at position 1 (Met-1) is an N-acetylmethionine. The interval 1–651 (MLGTGPAVAT…HVVSQTAVQV (651 aa)) is interaction with NBN. 32 HEAT repeats span residues 16–53 (SSNV…MELR), 55–99 (MSQE…VEGG), 100–137 (NSTR…AMAG), 138–179 (DTFT…AISV), 180–220 (PTFF…LILT), 222–276 (QREP…RISS), 277–313 (MEGE…PRHI), 314–364 (TPFT…CCRD), 365–409 (LMEE…AFTD), 410–445 (TQYL…VAVR), 446–494 (SEFK…RAMG), 495–529 (PGIQ…RQIP), 530–563 (QLKK…GLAH), 564–596 (QLAS…EFEG), 597–636 (HSLT…SIHL), 637–683 (ISGH…DERF), 686–724 (HLAQ…MNPA), 727–766 (MPFL…NAPR), 769–811 (RPYM…VSGL), 814–853 (RKWV…STGY), 857–893 (PYRK…LLGA), 894–942 (LDPY…GNLP), 943–988 (LDEF…KCVQ), 989–1027 (FLPQ…KSHI), 1029–1068 (PYMD…GEFK), 1069–1105 (LYLP…LFGA), 1106–1144 (NLDD…RLTE), 1145–1188 (SLDF…GKKY), 1189–1225 (QIFI…LADE), 1226–1273 (EEDP…GAAR), 1274–1311 (RVSK…QAYN), and 1312–1345 (PMAR…ELAL). At Ser-567 the chain carries Phosphoserine. Thr-1162 is modified (phosphothreonine). Lys-1218 carries the post-translational modification N6-acetyllysine. Ser-1261 is modified (phosphoserine). TPR repeat units lie at residues 1346–1382 (TSQD…GIVL), 1383–1408 (LGER…QKGP), 1409–1442 (TPAI…HFGE), 1443–1473 (LEIQ…NKED), 1474–1507 (PELM…VNDE), 1508–1541 (TQAK…RDTH), 1542–1574 (DGAF…LDAE), 1575–1614 (LTAM…RREI), 1615–1649 (IRQI…PHED), 1650–1693 (MRTW…PTAH), 1694–1731 (PQVT…AQHA), 1732–1786 (IATE…DRSW), 1787–1846 (YKAW…STEG), 1898–1930 (NNLQ…VKAI), 1931–1970 (QIDT…YHPQ), and 1971–2005 (ALIY…SNTL). Positions 1382 to 1982 (LLGERAAKCR…IYPLTVASKS (601 aa)) constitute an FAT domain. The 1D-myo-inositol hexakisphosphate site is built by Lys-1662, Lys-1702, and Arg-1749. Low complexity predominate over residues 1825 to 1860 (ITNATTAATTAASAAAATSTEGSNSESEAESNENSP). The segment at 1825 to 1867 (ITNATTAATTAASAAAATSTEGSNSESEAESNENSPTPSPLQK) is disordered. The interval 2012–2144 (VSEELIRVAI…DLELAVPGTY (133 aa)) is sufficient for interaction with the FKBP1A/rapamycin complex. Lys-2066 is covalently cross-linked (Glycyl lysine isopeptide (Lys-Gly) (interchain with G-Cter in ubiquitin)). The PI3K/PI4K catalytic domain maps to 2156 to 2469 (IAPSLQVITS…GVELGEPAHK (314 aa)). Ser-2159 is modified (phosphoserine; by TBK1). The segment at 2162-2168 (VITSKQR) is G-loop. The residue at position 2164 (Thr-2164) is a Phosphothreonine. ATP is bound by residues Ser-2165 and Gln-2167. Phosphothreonine; by PKB/AKT1 is present on Thr-2173. ATP-binding residues include Leu-2185, Lys-2187, Glu-2190, Tyr-2225, Gly-2238, Trp-2239, Val-2240, and Thr-2245. The interaction with MLST8 stretch occupies residues 2258 to 2296 (KILLNIEHRIMLRMAPDYDHLTLMQKVEVFEHAVNNTAG). Positions 2335–2343 (GLGDRHPSN) are catalytic loop. Asn-2343 provides a ligand contact to Mg(2+). 2 residues coordinate ATP: Met-2345 and Ile-2356. Residues 2355 to 2380 (HIDFGDCFEVAMTREKFPEKIPFRLT) form an activation loop region. Residue Asp-2357 participates in Mg(2+) binding. The residue at position 2446 (Thr-2446) is a Phosphothreonine; by RPS6KB1. Position 2448 is a phosphoserine; by RPS6KB1 (Ser-2448). Ser-2478 and Ser-2481 each carry phosphoserine. Residues 2517-2549 (DTLDVPTQVELLIKQATSHENLCQCYIGWCPFW) enclose the FATC domain.

The protein belongs to the PI3/PI4-kinase family. Part of the mechanistic target of rapamycin complex 1 (mTORC1) which contains MTOR, MLST8 and RPTOR. The mTORC1 complex is a 1 Md obligate dimer of two stoichiometric heterotetramers with overall dimensions of 290 A x 210 A x 135 A. It has a rhomboid shape and a central cavity, the dimeric interfaces are formed by interlocking interactions between the two MTOR and the two RPTOR subunits. The MLST8 subunit forms distal foot-like protuberances, and contacts only one MTOR within the complex, while the small AKT1S1/PRAS40 localizes to the midsection of the central core, in close proximity to RPTOR. mTORC1 associates with AKT1S1/PRAS40, which inhibits its activity by blocking MTOR substrate-recruitment site. Component of the mechanistic target of rapamycin complex 2 (mTORC2), consisting in two heterotretramers composed of MTOR, MLST8, RICTOR and MAPKAP1/SIN1. Interacts with PLPP7 and PML. Interacts with PRR5 and RICTOR; the interaction is direct within the mTORC2 complex and interaction with RICTOR is enhanced by deubiquitination of RICTOR by USP9X. mTORC1 and mTORC2 associate with DEPTOR, which regulates their activity. Interacts with WAC; WAC positively regulates MTOR activity by promoting the assembly of the TTT complex composed of TELO2, TTI1 and TTI2 and the RUVBL complex composed of RUVBL1 and RUVBL2 into the TTT-RUVBL complex which leads to the dimerization of the mTORC1 complex and its subsequent activation. Interacts with UBQLN1. Interacts with TTI1 and TELO2. Interacts with CLIP1; phosphorylates and regulates CLIP1. Interacts with NBN. Interacts with HTR6. Interacts with BRAT1. Interacts with MEAK7 (via C-terminal domain); the interaction increases upon nutrient stimulation. Interacts with TM4SF5; the interaction is positively regulated by arginine and is negatively regulated by leucine. Interacts with GPR137B. Interacts with NCKAP1L. Interacts with TPCN1 and TPCN2; the interaction is required for TPCN1 and TPCN2 sensitivity to ATP. Interacts with ATP6V1A and with CRYAB, forming a ternary complex. Interacts with SLC38A7; this interaction mediates the recruitment of mTORC1 to the lysosome and its subsequent activation. Interacts with TSPAN8. In terms of processing, autophosphorylates when part of mTORC1 or mTORC2. Phosphorylation at Ser-1261, Ser-2159 and Thr-2164 promotes autophosphorylation. Phosphorylated at Ser-2448 by RPS6KB1. Phosphorylation in the kinase domain modulates the interactions of MTOR with RPTOR and AKT1S1/PRAS40 and leads to increased intrinsic mTORC1 kinase activity. Phosphorylation at Ser-2159 by TBK1 in response to growth factors and pathogen recognition receptors promotes mTORC1 activity. Phosphorylation at Ser-2159 by TBK1 in response to EGF growth factor promotes mTORC2 activity, leading to AKT1 phosphorylation and activation. Phosphorylation at Thr-2173 in the ATP-binding region by AKT1 strongly reduces kinase activity. Post-translationally, ubiquitinated at Lys-2066 by the SCF(FBXO22) complex via 'Lys-27'-linked ubiquitination prevents mTORC1 substrate recruitment.

It is found in the lysosome membrane. The protein localises to the endoplasmic reticulum membrane. It localises to the golgi apparatus membrane. Its subcellular location is the cell membrane. The protein resides in the mitochondrion outer membrane. It is found in the cytoplasm. The protein localises to the nucleus. It localises to the PML body. Its subcellular location is the microsome membrane. The protein resides in the cytoplasmic vesicle. It is found in the phagosome. It catalyses the reaction L-seryl-[protein] + ATP = O-phospho-L-seryl-[protein] + ADP + H(+). The enzyme catalyses L-threonyl-[protein] + ATP = O-phospho-L-threonyl-[protein] + ADP + H(+). The catalysed reaction is L-tyrosyl-[protein] + ATP = O-phospho-L-tyrosyl-[protein] + ADP + H(+). With respect to regulation, the mTORC1 complex is activated in response to nutrients, growth factors or amino acids: activation requires relocalization of the mTORC1 complex to lysosomes that is mediated by the Ragulator complex, SLC38A9, and the Rag GTPases RagA/RRAGA, RagB/RRAGB, RagC/RRAGC and RagD/RRAGD. Activation of mTORC1 by growth factors such as insulin involves AKT1-mediated phosphorylation of TSC1-TSC2, which leads to the activation of the RHEB GTPase a potent activator of the protein kinase activity of mTORC1. Insulin-stimulated and amino acid-dependent phosphorylation at Ser-1261 promotes autophosphorylation and the activation of mTORC1. On the other hand, low cellular energy levels can inhibit mTORC1 through activation of PRKAA1 while hypoxia inhibits mTORC1 through a REDD1-dependent mechanism which may also require PRKAA1. The kinase activity of MTOR within the mTORC1 complex is positively regulated by MLST8. The kinase activity of MTOR is inhibited by DEPTOR and AKT1S1. The non-canonical mTORC1 complex is independent of the RHEB GTPase and specifically mediates phosphorylation of MiT/TFE factors TFEB and TFE3 but not other mTORC1 substrates: it is activated by FLCN, which activates Rag GTPases RagC/RRAGC and RagD/RRAGD. MTOR is the target of the immunosuppressive and anti-cancer drug rapamycin which acts in complex with FKBP1A/FKBP12, and specifically inhibits its kinase activity. mTORC2 is also activated by growth factors, but seems to be nutrient-insensitive. mTORC2 associates and is directly activated by ribosomes. mTORC2 may also be regulated by RHEB but in an indirect manner through the PI3K signaling pathway. Functionally, serine/threonine protein kinase which is a central regulator of cellular metabolism, growth and survival in response to hormones, growth factors, nutrients, energy and stress signals. MTOR directly or indirectly regulates the phosphorylation of at least 800 proteins. Functions as part of 2 structurally and functionally distinct signaling complexes mTORC1 and mTORC2 (mTOR complex 1 and 2). In response to nutrients, growth factors or amino acids, mTORC1 is recruited to the lysosome membrane and promotes protein, lipid and nucleotide synthesis by phosphorylating key regulators of mRNA translation and ribosome synthesis. This includes phosphorylation of EIF4EBP1 and release of its inhibition toward the elongation initiation factor 4E (eiF4E). Moreover, phosphorylates and activates RPS6KB1 and RPS6KB2 that promote protein synthesis by modulating the activity of their downstream targets including ribosomal protein S6, eukaryotic translation initiation factor EIF4B, and the inhibitor of translation initiation PDCD4. Stimulates the pyrimidine biosynthesis pathway, both by acute regulation through RPS6KB1-mediated phosphorylation of the biosynthetic enzyme CAD, and delayed regulation, through transcriptional enhancement of the pentose phosphate pathway which produces 5-phosphoribosyl-1-pyrophosphate (PRPP), an allosteric activator of CAD at a later step in synthesis, this function is dependent on the mTORC1 complex. Regulates ribosome synthesis by activating RNA polymerase III-dependent transcription through phosphorylation and inhibition of MAF1 an RNA polymerase III-repressor. Activates dormant ribosomes by mediating phosphorylation of SERBP1, leading to SERBP1 inactivation and reactivation of translation. In parallel to protein synthesis, also regulates lipid synthesis through SREBF1/SREBP1 and LPIN1. To maintain energy homeostasis mTORC1 may also regulate mitochondrial biogenesis through regulation of PPARGC1A. In the same time, mTORC1 inhibits catabolic pathways: negatively regulates autophagy through phosphorylation of ULK1. Under nutrient sufficiency, phosphorylates ULK1 at 'Ser-758', disrupting the interaction with AMPK and preventing activation of ULK1. Also prevents autophagy through phosphorylation of the autophagy inhibitor DAP. Also prevents autophagy by phosphorylating RUBCNL/Pacer under nutrient-rich conditions. Prevents autophagy by mediating phosphorylation of AMBRA1, thereby inhibiting AMBRA1 ability to mediate ubiquitination of ULK1 and interaction between AMBRA1 and PPP2CA. mTORC1 exerts a feedback control on upstream growth factor signaling that includes phosphorylation and activation of GRB10 a INSR-dependent signaling suppressor. Among other potential targets mTORC1 may phosphorylate CLIP1 and regulate microtubules. The mTORC1 complex is inhibited in response to starvation and amino acid depletion. The non-canonical mTORC1 complex, which acts independently of RHEB, specifically mediates phosphorylation of MiT/TFE factors TFEB and TFE3 in the presence of nutrients, promoting their cytosolic retention and inactivation. Upon starvation or lysosomal stress, inhibition of mTORC1 induces dephosphorylation and nuclear translocation of TFEB and TFE3, promoting their transcription factor activity. The mTORC1 complex regulates pyroptosis in macrophages by promoting GSDMD oligomerization. MTOR phosphorylates RPTOR which in turn inhibits mTORC1. As part of the mTORC2 complex, MTOR transduces signals from growth factors to pathways involved in proliferation, cytoskeletal organization, lipogenesis and anabolic output. In response to growth factors, mTORC2 phosphorylates and activates AGC protein kinase family members, including AKT (AKT1, AKT2 and AKT3), PKC (PRKCA, PRKCB and PRKCE) and SGK1. In contrast to mTORC1, mTORC2 is nutrient-insensitive. mTORC2 plays a critical role in AKT1 activation by mediating phosphorylation of different sites depending on the context, such as 'Thr-450', 'Ser-473', 'Ser-477' or 'Thr-479', facilitating the phosphorylation of the activation loop of AKT1 on 'Thr-308' by PDPK1/PDK1 which is a prerequisite for full activation. mTORC2 also regulates the phosphorylation of SGK1 at 'Ser-422'. mTORC2 may regulate the actin cytoskeleton, through phosphorylation of PRKCA, PXN and activation of the Rho-type guanine nucleotide exchange factors RHOA and RAC1A or RAC1B. The mTORC2 complex also phosphorylates various proteins involved in insulin signaling, such as FBXW8 and IGF2BP1. May also regulate insulin signaling by acting as a tyrosine protein kinase that catalyzes phosphorylation of IGF1R and INSR. Regulates osteoclastogenesis by adjusting the expression of CEBPB isoforms. Plays an important regulatory role in the circadian clock function; regulates period length and rhythm amplitude of the suprachiasmatic nucleus (SCN) and liver clocks. The protein is Serine/threonine-protein kinase mTOR of Mus musculus (Mouse).